A 265-amino-acid polypeptide reads, in one-letter code: 4-diphosphocytidyl-2-C-methyl-D-erythritol kinase (265 aa).

Lysine 8 is a catalytic residue. 95 to 105 contributes to the ATP binding site; the sequence is PIGAGLGGGSS. Residue aspartate 135 is part of the active site.

Belongs to the GHMP kinase family. IspE subfamily.

The catalysed reaction is 4-CDP-2-C-methyl-D-erythritol + ATP = 4-CDP-2-C-methyl-D-erythritol 2-phosphate + ADP + H(+). It participates in isoprenoid biosynthesis; isopentenyl diphosphate biosynthesis via DXP pathway; isopentenyl diphosphate from 1-deoxy-D-xylulose 5-phosphate: step 3/6. Catalyzes the phosphorylation of the position 2 hydroxy group of 4-diphosphocytidyl-2C-methyl-D-erythritol. The sequence is that of 4-diphosphocytidyl-2-C-methyl-D-erythritol kinase from Ureaplasma parvum serovar 3 (strain ATCC 27815 / 27 / NCTC 11736).